The sequence spans 355 residues: 4-dimethylallyltryptophan N-methyltransferase easF (355 aa).

It belongs to the methyltransferase superfamily. As to quaternary structure, homodimer.

The enzyme catalyses 4-(3-methylbut-2-enyl)-L-tryptophan + S-adenosyl-L-methionine = 4-(3-methylbut-2-enyl)-L-abrine + S-adenosyl-L-homocysteine + H(+). It participates in alkaloid biosynthesis; ergot alkaloid biosynthesis. Functionally, 4-dimethylallyltryptophan N-methyltransferase; part of the gene cluster that mediates the biosynthesis of fungal ergot alkaloid. DmaW catalyzes the first step of ergot alkaloid biosynthesis by condensing dimethylallyl diphosphate (DMAP) and tryptophan to form 4-dimethylallyl-L-tryptophan. The second step is catalyzed by the methyltransferase easF that methylates 4-dimethylallyl-L-tryptophan in the presence of S-adenosyl-L-methionine, resulting in the formation of 4-dimethylallyl-L-abrine. The catalase easC and the FAD-dependent oxidoreductase easE then transform 4-dimethylallyl-L-abrine to chanoclavine-I which is further oxidized by easD in the presence of NAD(+), resulting in the formation of chanoclavine-I aldehyde. Agroclavine dehydrogenase easG then mediates the conversion of chanoclavine-I aldehyde to agroclavine via a non-enzymatic adduct reaction: the substrate is an iminium intermediate that is formed spontaneously from chanoclavine-I aldehyde in the presence of glutathione. Further conversion of agroclavine to paspalic acid is a two-step process involving oxidation of agroclavine to elymoclavine and of elymoclavine to paspalic acid, the second step being performed by the elymoclavine oxidase cloA. However, cloA does not encode a functional enzyme indicating that C.fusiformis terminates its ergot alkaloid pathway at elymoclavine. The chain is 4-dimethylallyltryptophan N-methyltransferase easF from Claviceps fusiformis (Ergot fungus).